We begin with the raw amino-acid sequence, 149 residues long: 3-hydroxyacyl-[acyl-carrier-protein] dehydratase FabZ (149 aa).

The active site involves histidine 50.

Belongs to the thioester dehydratase family. FabZ subfamily.

It is found in the cytoplasm. The catalysed reaction is a (3R)-hydroxyacyl-[ACP] = a (2E)-enoyl-[ACP] + H2O. In terms of biological role, involved in unsaturated fatty acids biosynthesis. Catalyzes the dehydration of short chain beta-hydroxyacyl-ACPs and long chain saturated and unsaturated beta-hydroxyacyl-ACPs. This Pediococcus pentosaceus (strain ATCC 25745 / CCUG 21536 / LMG 10740 / 183-1w) protein is 3-hydroxyacyl-[acyl-carrier-protein] dehydratase FabZ.